The chain runs to 442 residues: tRNA modification GTPase MnmE (442 aa).

Positions 21, 79, and 118 each coordinate (6S)-5-formyl-5,6,7,8-tetrahydrofolate. Residues 214-367 (GFKIAIVGKP…LKEELQNYLN (154 aa)) form the TrmE-type G domain. Asparagine 224 lines the K(+) pocket. Residues 224-229 (NVGKSS), 243-249 (SDIAGTT), and 268-271 (DTAG) each bind GTP. Serine 228 is a Mg(2+) binding site. K(+) is bound by residues serine 243, isoleucine 245, and threonine 248. Threonine 249 provides a ligand contact to Mg(2+). Lysine 442 is a binding site for (6S)-5-formyl-5,6,7,8-tetrahydrofolate.

Belongs to the TRAFAC class TrmE-Era-EngA-EngB-Septin-like GTPase superfamily. TrmE GTPase family. Homodimer. Heterotetramer of two MnmE and two MnmG subunits. K(+) serves as cofactor.

Its subcellular location is the cytoplasm. Exhibits a very high intrinsic GTPase hydrolysis rate. Involved in the addition of a carboxymethylaminomethyl (cmnm) group at the wobble position (U34) of certain tRNAs, forming tRNA-cmnm(5)s(2)U34. This is tRNA modification GTPase MnmE from Campylobacter jejuni subsp. jejuni serotype O:23/36 (strain 81-176).